The chain runs to 124 residues: UPF0482 protein YPK_1977 (124 aa).

Residues 1-32 (MMKINNLPRLIRAFLPATLLMLPLVWQTPALA) form the signal peptide. The segment at 47-69 (GGNNDPMSKEQARQSQQQWDETN) is disordered.

Belongs to the UPF0482 family.

This Yersinia pseudotuberculosis serotype O:3 (strain YPIII) protein is UPF0482 protein YPK_1977.